Consider the following 462-residue polypeptide: Bifunctional dihydrofolate reductase-thymidylate synthase (462 aa).

The 160-residue stretch at 6 to 165 folds into the DHFR domain; that stretch reads TFSMVLAMTL…INYDYQHLIN (160 aa). Val10 provides a ligand contact to substrate. Residues Ala12 and 18–24 contribute to the NADP(+) site; that span reads GIGYQNR. Residue Asp32 coordinates substrate. Residues 49–51 and 68–71 contribute to the NADP(+) site; these read RKT and ISKN. Position 101 (Ile101) interacts with substrate. Residue 102 to 109 coordinates NADP(+); the sequence is GGKRIFEE. Thr122 is a binding site for substrate. The thymidylate synthase stretch occupies residues 180–462; sequence ENQYLDMITK…HDKIEMKMAV (283 aa). Arg200 serves as a coordination point for dUMP. The active site involves Cys345. DUMP-binding positions include His346, 364 to 368, Asn376, and 406 to 408; these read QRSCD and HIY.

The protein in the N-terminal section; belongs to the dihydrofolate reductase family. This sequence in the C-terminal section; belongs to the thymidylate synthase family.

The enzyme catalyses (6S)-5,6,7,8-tetrahydrofolate + NADP(+) = 7,8-dihydrofolate + NADPH + H(+). It carries out the reaction dUMP + (6R)-5,10-methylene-5,6,7,8-tetrahydrofolate = 7,8-dihydrofolate + dTMP. It functions in the pathway cofactor biosynthesis; tetrahydrofolate biosynthesis; 5,6,7,8-tetrahydrofolate from 7,8-dihydrofolate: step 1/1. Its function is as follows. Bifunctional enzyme. Involved in de novo dTMP biosynthesis. Key enzyme in folate metabolism. Catalyzes an essential reaction for de novo glycine and purine synthesis, DNA precursor synthesis, and for the conversion of dUMP to dTMP. The protein is Bifunctional dihydrofolate reductase-thymidylate synthase of Paramecium tetraurelia.